Consider the following 932-residue polypeptide: 2-oxoglutarate dehydrogenase E1 component (932 aa).

The protein belongs to the alpha-ketoglutarate dehydrogenase family. As to quaternary structure, homodimer. Part of the 2-oxoglutarate dehydrogenase (OGDH) complex composed of E1 (2-oxoglutarate dehydrogenase), E2 (dihydrolipoamide succinyltransferase) and E3 (dihydrolipoamide dehydrogenase); the complex contains multiple copies of the three enzymatic components (E1, E2 and E3). Thiamine diphosphate is required as a cofactor.

The enzyme catalyses N(6)-[(R)-lipoyl]-L-lysyl-[protein] + 2-oxoglutarate + H(+) = N(6)-[(R)-S(8)-succinyldihydrolipoyl]-L-lysyl-[protein] + CO2. Its function is as follows. E1 component of the 2-oxoglutarate dehydrogenase (OGDH) complex which catalyzes the decarboxylation of 2-oxoglutarate, the first step in the conversion of 2-oxoglutarate to succinyl-CoA and CO(2). In Staphylococcus aureus (strain USA300), this protein is 2-oxoglutarate dehydrogenase E1 component.